The chain runs to 508 residues: Photosystem II CP47 reaction center protein (508 aa).

6 helical membrane-spanning segments follow: residues 21–36 (AVHIMHTALVAGWAGS), 101–115 (IVFSGLCFLAAIWHW), 140–156 (GIHLFLSGVACFGFGTF), 203–218 (IAAGTLGILAGLFHLS), 237–252 (VLSSSIAAVFFAAFVV), and 457–472 (SFALLFFFGHIWHGAR).

The protein belongs to the PsbB/PsbC family. PsbB subfamily. PSII is composed of 1 copy each of membrane proteins PsbA, PsbB, PsbC, PsbD, PsbE, PsbF, PsbH, PsbI, PsbJ, PsbK, PsbL, PsbM, PsbT, PsbX, PsbY, PsbZ, Psb30/Ycf12, at least 3 peripheral proteins of the oxygen-evolving complex and a large number of cofactors. It forms dimeric complexes. The cofactor is Binds multiple chlorophylls. PSII binds additional chlorophylls, carotenoids and specific lipids..

Its subcellular location is the plastid. It is found in the chloroplast thylakoid membrane. Functionally, one of the components of the core complex of photosystem II (PSII). It binds chlorophyll and helps catalyze the primary light-induced photochemical processes of PSII. PSII is a light-driven water:plastoquinone oxidoreductase, using light energy to abstract electrons from H(2)O, generating O(2) and a proton gradient subsequently used for ATP formation. The sequence is that of Photosystem II CP47 reaction center protein from Citrus sinensis (Sweet orange).